The sequence spans 198 residues: Na(+)-translocating NADH-quinone reductase subunit E (198 aa).

The next 6 helical transmembrane spans lie at 11-31, 40-60, 77-97, 110-130, 140-160, and 176-196; these read SIFI…FLAV, GLGI…NLVF, FLGF…LEMF, GIFL…SFMV, VVYG…MAAI, and LGIT…FSGI.

The protein belongs to the NqrDE/RnfAE family. Composed of six subunits; NqrA, NqrB, NqrC, NqrD, NqrE and NqrF.

It is found in the cell inner membrane. The enzyme catalyses a ubiquinone + n Na(+)(in) + NADH + H(+) = a ubiquinol + n Na(+)(out) + NAD(+). Its function is as follows. NQR complex catalyzes the reduction of ubiquinone-1 to ubiquinol by two successive reactions, coupled with the transport of Na(+) ions from the cytoplasm to the periplasm. NqrA to NqrE are probably involved in the second step, the conversion of ubisemiquinone to ubiquinol. This is Na(+)-translocating NADH-quinone reductase subunit E from Tolumonas auensis (strain DSM 9187 / NBRC 110442 / TA 4).